The chain runs to 274 residues: Dermonecrotic toxin SdSicTox-betaIIB1biv (274 aa).

Residue histidine 5 is part of the active site. Mg(2+) is bound by residues glutamate 25 and aspartate 27. Histidine 41 functions as the Nucleophile in the catalytic mechanism. 2 disulfides stabilise this stretch: cysteine 45/cysteine 51 and cysteine 47/cysteine 190. Aspartate 85 is a binding site for Mg(2+).

It belongs to the arthropod phospholipase D family. Class II subfamily. It depends on Mg(2+) as a cofactor. Expressed by the venom gland.

The protein localises to the secreted. The enzyme catalyses an N-(acyl)-sphingosylphosphocholine = an N-(acyl)-sphingosyl-1,3-cyclic phosphate + choline. The catalysed reaction is an N-(acyl)-sphingosylphosphoethanolamine = an N-(acyl)-sphingosyl-1,3-cyclic phosphate + ethanolamine. It carries out the reaction a 1-acyl-sn-glycero-3-phosphocholine = a 1-acyl-sn-glycero-2,3-cyclic phosphate + choline. It catalyses the reaction a 1-acyl-sn-glycero-3-phosphoethanolamine = a 1-acyl-sn-glycero-2,3-cyclic phosphate + ethanolamine. Dermonecrotic toxins cleave the phosphodiester linkage between the phosphate and headgroup of certain phospholipids (sphingolipid and lysolipid substrates), forming an alcohol (often choline) and a cyclic phosphate. This toxin acts on sphingomyelin (SM). It may also act on ceramide phosphoethanolamine (CPE), lysophosphatidylcholine (LPC) and lysophosphatidylethanolamine (LPE), but not on lysophosphatidylserine (LPS), and lysophosphatidylglycerol (LPG). It acts by transphosphatidylation, releasing exclusively cyclic phosphate products as second products. Induces dermonecrosis, hemolysis, increased vascular permeability, edema, inflammatory response, and platelet aggregation. This chain is Dermonecrotic toxin SdSicTox-betaIIB1biv, found in Sicarius cf. damarensis (strain GJB-2008) (Six-eyed sand spider).